The following is a 288-amino-acid chain: Light-independent protochlorophyllide reductase iron-sulfur ATP-binding protein (288 aa).

ATP-binding positions include 10-15 (GIGKST) and K39. S14 lines the Mg(2+) pocket. [4Fe-4S] cluster contacts are provided by C95 and C129. 180–181 (NR) serves as a coordination point for ATP.

It belongs to the NifH/BchL/ChlL family. Homodimer. Protochlorophyllide reductase is composed of three subunits; ChlL, ChlN and ChlB. It depends on [4Fe-4S] cluster as a cofactor.

The enzyme catalyses chlorophyllide a + oxidized 2[4Fe-4S]-[ferredoxin] + 2 ADP + 2 phosphate = protochlorophyllide a + reduced 2[4Fe-4S]-[ferredoxin] + 2 ATP + 2 H2O. Its pathway is porphyrin-containing compound metabolism; chlorophyll biosynthesis (light-independent). Component of the dark-operative protochlorophyllide reductase (DPOR) that uses Mg-ATP and reduced ferredoxin to reduce ring D of protochlorophyllide (Pchlide) to form chlorophyllide a (Chlide). This reaction is light-independent. The L component serves as a unique electron donor to the NB-component of the complex, and binds Mg-ATP. This chain is Light-independent protochlorophyllide reductase iron-sulfur ATP-binding protein, found in Nostoc punctiforme (strain ATCC 29133 / PCC 73102).